A 249-amino-acid chain; its full sequence is Segregation and condensation protein A (249 aa).

The protein belongs to the ScpA family. Component of a cohesin-like complex composed of ScpA, ScpB and the Smc homodimer, in which ScpA and ScpB bind to the head domain of Smc. The presence of the three proteins is required for the association of the complex with DNA.

It localises to the cytoplasm. In terms of biological role, participates in chromosomal partition during cell division. May act via the formation of a condensin-like complex containing Smc and ScpB that pull DNA away from mid-cell into both cell halves. The polypeptide is Segregation and condensation protein A (Listeria innocua serovar 6a (strain ATCC BAA-680 / CLIP 11262)).